A 230-amino-acid chain; its full sequence is RNA chaperone ProQ (230 aa).

The disordered stretch occupies residues alanine 106–isoleucine 181. Residues arginine 146–proline 155 show a composition bias toward basic and acidic residues. Positions alanine 158–serine 167 are enriched in low complexity.

It belongs to the ProQ family.

It is found in the cytoplasm. Its function is as follows. RNA chaperone with significant RNA binding, RNA strand exchange and RNA duplexing activities. May regulate ProP activity through an RNA-based, post-transcriptional mechanism. The polypeptide is RNA chaperone ProQ (Cronobacter sakazakii (strain ATCC BAA-894) (Enterobacter sakazakii)).